We begin with the raw amino-acid sequence, 202 residues long: Twist-related protein 1 (202 aa).

Over residues M1–S18 the composition is skewed to low complexity. Residues M1–E105 form a disordered region. Residues R34 to R43 are compositionally biased toward basic residues. Gly residues-rich tracts occupy residues A46–E65 and G80–S99. One can recognise a bHLH domain in the interval T108–L159. The tract at residues Q161–R191 is sufficient for transactivation activity.

In terms of assembly, efficient DNA binding requires dimerization with another bHLH protein. Homodimer or heterodimer with E proteins such as TCF3. ID1 binds preferentially to TCF3 but does not interact efficiently with TWIST1 so ID1 levels control the amount of TCF3 available to dimerize with TWIST1 and thus determine the type of dimer formed. In terms of tissue distribution, subset of mesodermal cells.

It localises to the nucleus. In terms of biological role, acts as a transcriptional regulator. Inhibits myogenesis by sequestrating E proteins, inhibiting trans-activation by MEF2, and inhibiting DNA-binding by MYOD1 through physical interaction. This interaction probably involves the basic domains of both proteins. Also represses expression of pro-inflammatory cytokines such as TNFA and IL1B. Regulates cranial suture patterning and fusion. Activates transcription as a heterodimer with E proteins. Regulates gene expression differentially, depending on dimer composition. Homodimers induce expression of FGFR2 and POSTN while heterodimers repress FGFR2 and POSTN expression and induce THBS1 expression. Heterodimerization is also required for osteoblast differentiation. Represses the activity of the circadian transcriptional activator: NPAS2-BMAL1 heterodimer. The polypeptide is Twist-related protein 1 (TWIST1) (Homo sapiens (Human)).